Here is a 334-residue protein sequence, read N- to C-terminus: Phospholipase A1 2 (334 aa).

The signal sequence occupies residues 1–23 (MMNLKYLLFFCLVQALHYCYAYG). Positions 24–33 (DPSLSNELDR) are excised as a propeptide. Cysteine 37 and cysteine 120 are disulfide-bonded. Serine 170 acts as the Nucleophile in catalysis. The Charge relay system role is filled by aspartate 198. 2 cysteine pairs are disulfide-bonded: cysteine 209/cysteine 214 and cysteine 252/cysteine 261. Histidine 263 (charge relay system) is an active-site residue. Intrachain disulfides connect cysteine 278/cysteine 302, cysteine 279/cysteine 327, and cysteine 295/cysteine 300.

It belongs to the AB hydrolase superfamily. Lipase family. Post-translationally, not glycosylated. As to expression, expressed by the venom gland.

The protein resides in the secreted. The catalysed reaction is a 1,2-diacyl-sn-glycero-3-phosphocholine + H2O = a 2-acyl-sn-glycero-3-phosphocholine + a fatty acid + H(+). Its function is as follows. Catalyzes the hydrolysis of phosphatidylcholine with phospholipase A1 activity (6.3 U/ml). May act as an allergen and induce hemolytic activity. This chain is Phospholipase A1 2, found in Vespa affinis (Lesser banded hornet).